A 478-amino-acid chain; its full sequence is MILQNNSIAQQIANEGGVEAYLHAQQHKTMLRFLTCGSVDDGKSTLIGRLLHDTRQIYEDQLTTLHTDSKRLGTQGEKLDLALLVDGLQAEREQGITIDVAYRYFSTEQRKFIIADTPGHEQYTRNMATGASTCDLAILLIDARKGVLDQTRRHSFIATLLGIRHLVVAVNKMDLVDYQESVFEQFKQDYLSFAQQLPTDLDIKFVPLSALDGDNVASPSEKMNWYSGPTLLEVLESVDVVNASRQQPLRFPVQYVNRPNLDFRGYAGTLSAGIVRVGQKIKVLPSGVESTVARIVTFDGDLTQAGPGEAITLVLTDEVDISRGDLLVDASETLQAAQNALVDVVWMAEQPLVAGQSYDIKIAGKKTRARVENIQYQVEINSLTQRVVESLPLNGIGLVELAFDEPLVLDSYQRNRDTGGMIFIDRLSNVTVGAGLIRETLESVYQENTEFSAFELELNALVRRHFPHWGARDLLGGK.

The 217-residue stretch at 28–244 (KTMLRFLTCG…LESVDVVNAS (217 aa)) folds into the tr-type G domain. The tract at residues 37–44 (GSVDDGKS) is G1. 37–44 (GSVDDGKS) is a binding site for GTP. The segment at 95–99 (GITID) is G2. A G3 region spans residues 116-119 (DTPG). Residues 116–120 (DTPGH) and 171–174 (NKMD) each bind GTP. Positions 171-174 (NKMD) are G4. Residues 209-211 (SAL) are G5.

This sequence belongs to the TRAFAC class translation factor GTPase superfamily. Classic translation factor GTPase family. CysN/NodQ subfamily. Heterodimer composed of CysD, the smaller subunit, and CysN.

The enzyme catalyses sulfate + ATP + H(+) = adenosine 5'-phosphosulfate + diphosphate. The protein operates within sulfur metabolism; hydrogen sulfide biosynthesis; sulfite from sulfate: step 1/3. Its function is as follows. With CysD forms the ATP sulfurylase (ATPS) that catalyzes the adenylation of sulfate producing adenosine 5'-phosphosulfate (APS) and diphosphate, the first enzymatic step in sulfur assimilation pathway. APS synthesis involves the formation of a high-energy phosphoric-sulfuric acid anhydride bond driven by GTP hydrolysis by CysN coupled to ATP hydrolysis by CysD. The protein is Sulfate adenylyltransferase subunit 1 of Yersinia enterocolitica serotype O:8 / biotype 1B (strain NCTC 13174 / 8081).